Here is a 396-residue protein sequence, read N- to C-terminus: Enoyl-[acyl-carrier-protein] reductase [NADH] (396 aa).

NAD(+) contacts are provided by residues 47-52 (GASTGF), 73-74 (FE), 110-111 (DA), and 138-139 (LA). A substrate-binding site is contributed by Tyr224. The active-site Proton donor is Tyr234. NAD(+) is bound by residues Lys243 and 272–274 (LVT).

The protein belongs to the TER reductase family. In terms of assembly, monomer.

The enzyme catalyses a 2,3-saturated acyl-[ACP] + NAD(+) = a (2E)-enoyl-[ACP] + NADH + H(+). It participates in lipid metabolism; fatty acid biosynthesis. Its function is as follows. Involved in the final reduction of the elongation cycle of fatty acid synthesis (FAS II). Catalyzes the reduction of a carbon-carbon double bond in an enoyl moiety that is covalently linked to an acyl carrier protein (ACP). This chain is Enoyl-[acyl-carrier-protein] reductase [NADH], found in Cytophaga hutchinsonii (strain ATCC 33406 / DSM 1761 / CIP 103989 / NBRC 15051 / NCIMB 9469 / D465).